The sequence spans 121 residues: Basic phospholipase A2 BbTX-III (121 aa).

Ca(2+) contacts are provided by Tyr-27, Gly-29, and Gly-31. Intrachain disulfides connect Cys-28-Cys-44, Cys-43-Cys-95, Cys-49-Cys-121, Cys-50-Cys-88, Cys-58-Cys-82, and Cys-76-Cys-86. His-47 is an active-site residue. Residue Asp-48 participates in Ca(2+) binding. The active site involves Asp-89.

This sequence belongs to the phospholipase A2 family. Group II subfamily. D49 sub-subfamily. As to quaternary structure, homodimer; non-covalently linked. Ca(2+) is required as a cofactor. In terms of tissue distribution, expressed by the venom gland.

The protein localises to the secreted. It catalyses the reaction a 1,2-diacyl-sn-glycero-3-phosphocholine + H2O = a 1-acyl-sn-glycero-3-phosphocholine + a fatty acid + H(+). Snake venom phospholipase A2 (PLA2) that exhibits myotoxin and anticoagulant activity. Displays edema-inducing activities in mouse paw. Also displays cytotoxic activity against some cell lines and myotubes, and antimicrobial activities against E.coli, C.albicans and Leishmania. PLA2 catalyzes the calcium-dependent hydrolysis of the 2-acyl groups in 3-sn-phosphoglycerides. This chain is Basic phospholipase A2 BbTX-III, found in Bothrops brazili (Brazil's lancehead).